A 229-amino-acid chain; its full sequence is Large ribosomal subunit protein uL1 (229 aa).

It belongs to the universal ribosomal protein uL1 family. Part of the 50S ribosomal subunit.

Functionally, binds directly to 23S rRNA. The L1 stalk is quite mobile in the ribosome, and is involved in E site tRNA release. Protein L1 is also a translational repressor protein, it controls the translation of the L11 operon by binding to its mRNA. In Streptococcus equi subsp. zooepidemicus (strain MGCS10565), this protein is Large ribosomal subunit protein uL1.